The primary structure comprises 333 residues: MQQYSSKYNKQAILLANLGTPDNYDTKSIKRYLKEFLSDPRVIEANPVLWKIILNLIILPIRAKKNVHTYKTVWNKQHNKSPLLFYTENLADKLDKKLDNYIVDYAMRYGNPSIESKIKNLQDQGATEIIIFPLYPQYSATTTATVYDEVYRVLSKLRWQPTIKGINPYYDNKFHIQTISQQIKEHLKKLDSTPDTVLFSFHGLPKEYFDKGDPYYCHCHKTYRLVKEELQNEYPNIDFELSFQSRFGPKKWLEPYTTVKLEEFAKQNKSVVVIAPGFSADCLETLEELAISEKENFIKKGGKEFSLIPCLNDSNQHVDMLYNIINEEICLKK.

The Fe cation site is built by His202 and Glu284.

It belongs to the ferrochelatase family.

The protein localises to the cytoplasm. It catalyses the reaction heme b + 2 H(+) = protoporphyrin IX + Fe(2+). Its pathway is porphyrin-containing compound metabolism; protoheme biosynthesis; protoheme from protoporphyrin-IX: step 1/1. Functionally, catalyzes the ferrous insertion into protoporphyrin IX. The chain is Ferrochelatase from Francisella tularensis subsp. novicida (strain U112).